A 167-amino-acid chain; its full sequence is NAD(P)H-quinone oxidoreductase subunit I, chloroplastic (167 aa).

2 4Fe-4S ferredoxin-type domains span residues 55–84 (GRIH…VDWK) and 95–124 (LNYS…MTEE). Cys64, Cys67, Cys70, Cys74, Cys104, Cys107, Cys110, and Cys114 together coordinate [4Fe-4S] cluster.

The protein belongs to the complex I 23 kDa subunit family. NDH is composed of at least 16 different subunits, 5 of which are encoded in the nucleus. [4Fe-4S] cluster serves as cofactor.

The protein localises to the plastid. It is found in the chloroplast thylakoid membrane. It carries out the reaction a plastoquinone + NADH + (n+1) H(+)(in) = a plastoquinol + NAD(+) + n H(+)(out). The catalysed reaction is a plastoquinone + NADPH + (n+1) H(+)(in) = a plastoquinol + NADP(+) + n H(+)(out). In terms of biological role, NDH shuttles electrons from NAD(P)H:plastoquinone, via FMN and iron-sulfur (Fe-S) centers, to quinones in the photosynthetic chain and possibly in a chloroplast respiratory chain. The immediate electron acceptor for the enzyme in this species is believed to be plastoquinone. Couples the redox reaction to proton translocation, and thus conserves the redox energy in a proton gradient. The polypeptide is NAD(P)H-quinone oxidoreductase subunit I, chloroplastic (Barbarea verna (Land cress)).